Consider the following 362-residue polypeptide: Probable dual-specificity RNA methyltransferase RlmN (362 aa).

Glutamate 91 functions as the Proton acceptor in the catalytic mechanism. Residues 97-329 (QHYGLSVCVT…KKNGVNCVVR (233 aa)) enclose the Radical SAM core domain. A disulfide bridge connects residues cysteine 104 and cysteine 340. The [4Fe-4S] cluster site is built by cysteine 111, cysteine 115, and cysteine 118. S-adenosyl-L-methionine is bound by residues 163–164 (GE), serine 195, 218–220 (SLH), and asparagine 296. The active-site S-methylcysteine intermediate is the cysteine 340.

Belongs to the radical SAM superfamily. RlmN family. Requires [4Fe-4S] cluster as cofactor.

The protein resides in the cytoplasm. It carries out the reaction adenosine(2503) in 23S rRNA + 2 reduced [2Fe-2S]-[ferredoxin] + 2 S-adenosyl-L-methionine = 2-methyladenosine(2503) in 23S rRNA + 5'-deoxyadenosine + L-methionine + 2 oxidized [2Fe-2S]-[ferredoxin] + S-adenosyl-L-homocysteine. The catalysed reaction is adenosine(37) in tRNA + 2 reduced [2Fe-2S]-[ferredoxin] + 2 S-adenosyl-L-methionine = 2-methyladenosine(37) in tRNA + 5'-deoxyadenosine + L-methionine + 2 oxidized [2Fe-2S]-[ferredoxin] + S-adenosyl-L-homocysteine. Its function is as follows. Specifically methylates position 2 of adenine 2503 in 23S rRNA and position 2 of adenine 37 in tRNAs. This Streptococcus gordonii (strain Challis / ATCC 35105 / BCRC 15272 / CH1 / DL1 / V288) protein is Probable dual-specificity RNA methyltransferase RlmN.